A 363-amino-acid chain; its full sequence is 3-dehydroquinate synthase (363 aa).

Residues 72–77 (SGEKEK), 130–131 (TT), K142, and K151 each bind NAD(+). Residues E184, H247, and H264 each contribute to the Zn(2+) site.

The protein belongs to the sugar phosphate cyclases superfamily. Dehydroquinate synthase family. Co(2+) serves as cofactor. The cofactor is Zn(2+). NAD(+) is required as a cofactor.

It localises to the cytoplasm. The enzyme catalyses 7-phospho-2-dehydro-3-deoxy-D-arabino-heptonate = 3-dehydroquinate + phosphate. The protein operates within metabolic intermediate biosynthesis; chorismate biosynthesis; chorismate from D-erythrose 4-phosphate and phosphoenolpyruvate: step 2/7. Functionally, catalyzes the conversion of 3-deoxy-D-arabino-heptulosonate 7-phosphate (DAHP) to dehydroquinate (DHQ). This Bacillus thuringiensis (strain Al Hakam) protein is 3-dehydroquinate synthase.